The following is a 110-amino-acid chain: Phosphoribosyl-AMP cyclohydrolase (110 aa).

Asp80 contacts Mg(2+). Position 81 (Cys81) interacts with Zn(2+). Mg(2+) is bound by residues Asp82 and Asp84. Residues Cys97 and Cys104 each contribute to the Zn(2+) site.

It belongs to the PRA-CH family. Homodimer. It depends on Mg(2+) as a cofactor. Zn(2+) serves as cofactor.

It is found in the cytoplasm. The enzyme catalyses 1-(5-phospho-beta-D-ribosyl)-5'-AMP + H2O = 1-(5-phospho-beta-D-ribosyl)-5-[(5-phospho-beta-D-ribosylamino)methylideneamino]imidazole-4-carboxamide. It participates in amino-acid biosynthesis; L-histidine biosynthesis; L-histidine from 5-phospho-alpha-D-ribose 1-diphosphate: step 3/9. Functionally, catalyzes the hydrolysis of the adenine ring of phosphoribosyl-AMP. This chain is Phosphoribosyl-AMP cyclohydrolase, found in Clostridium botulinum (strain ATCC 19397 / Type A).